The primary structure comprises 688 residues: Glycine--tRNA ligase beta subunit (688 aa).

Belongs to the class-II aminoacyl-tRNA synthetase family. In terms of assembly, tetramer of two alpha and two beta subunits.

The protein localises to the cytoplasm. The enzyme catalyses tRNA(Gly) + glycine + ATP = glycyl-tRNA(Gly) + AMP + diphosphate. In Listeria monocytogenes serotype 4b (strain CLIP80459), this protein is Glycine--tRNA ligase beta subunit.